Here is a 451-residue protein sequence, read N- to C-terminus: Phosphoglucosamine mutase (451 aa).

Ser-102 acts as the Phosphoserine intermediate in catalysis. Mg(2+) contacts are provided by Ser-102, Asp-243, Asp-245, and Asp-247. Ser-102 is subject to Phosphoserine.

Belongs to the phosphohexose mutase family. The cofactor is Mg(2+). Post-translationally, activated by phosphorylation.

It carries out the reaction alpha-D-glucosamine 1-phosphate = D-glucosamine 6-phosphate. Catalyzes the conversion of glucosamine-6-phosphate to glucosamine-1-phosphate. In Sinorhizobium medicae (strain WSM419) (Ensifer medicae), this protein is Phosphoglucosamine mutase.